The chain runs to 299 residues: N-carbamoylputrescine amidase (299 aa).

Residues 10–268 (VVVSSLQFAC…EAVLVAQFDL (259 aa)) enclose the CN hydrolase domain. Glu-49 acts as the Proton acceptor in catalysis. Lys-122 acts as the Proton donor in catalysis. The active-site Nucleophile is Cys-159.

Belongs to the carbon-nitrogen hydrolase superfamily. In terms of assembly, homooctamer (isoform 2). As to expression, expressed in roots, stems, leaves and flowers.

It catalyses the reaction N-carbamoylputrescine + H2O + 2 H(+) = putrescine + NH4(+) + CO2. It functions in the pathway amine and polyamine biosynthesis; putrescine biosynthesis via agmatine pathway; putrescine from N-carbamoylputrescine (amidase route): step 1/1. In terms of biological role, involved in polyamine biosynthesis. Catalyzes the hydrolysis of N-carbamoylputrescine to produce putrescine and ammonia. This is N-carbamoylputrescine amidase from Arabidopsis thaliana (Mouse-ear cress).